The sequence spans 906 residues: Protein translocase subunit SecA (906 aa).

ATP-binding positions include Gln86, 104 to 108 (GEGKT), and Asp499. The segment covering 834–847 (KLQKNMRESREDPA) has biased composition (basic and acidic residues). The tract at residues 834–887 (KLQKNMRESREDPAFSKYNAGSSLETDLKPVVSRVDPKDRNPDDPTSWGRVSRN) is disordered. The Zn(2+) site is built by Cys890, Cys892, Cys901, and His902.

This sequence belongs to the SecA family. In terms of assembly, monomer and homodimer. Part of the essential Sec protein translocation apparatus which comprises SecA, SecYEG and auxiliary proteins SecDF-YajC and YidC. It depends on Zn(2+) as a cofactor.

The protein localises to the cell inner membrane. It is found in the cytoplasm. It catalyses the reaction ATP + H2O + cellular proteinSide 1 = ADP + phosphate + cellular proteinSide 2.. In terms of biological role, part of the Sec protein translocase complex. Interacts with the SecYEG preprotein conducting channel. Has a central role in coupling the hydrolysis of ATP to the transfer of proteins into and across the cell membrane, serving both as a receptor for the preprotein-SecB complex and as an ATP-driven molecular motor driving the stepwise translocation of polypeptide chains across the membrane. This is Protein translocase subunit SecA from Rickettsia felis (strain ATCC VR-1525 / URRWXCal2) (Rickettsia azadi).